The sequence spans 195 residues: Heavy metal-associated isoprenylated plant protein 18 (195 aa).

Disordered stretches follow at residues D36–T76 and E145–S172. Basic and acidic residues-rich tracts occupy residues T47–T76 and E145–D157. An HMA domain is found at T78 to K149. A Cysteine methyl ester modification is found at C192. C192 is lipidated: S-farnesyl cysteine. A propeptide spans S193–S195 (removed in mature form).

Belongs to the HIPP family.

In terms of biological role, probable heavy-metal-binding protein. Required for female gametophyte development and function. The chain is Heavy metal-associated isoprenylated plant protein 18 from Arabidopsis thaliana (Mouse-ear cress).